The following is a 469-amino-acid chain: Hydrogen cyanide synthase subunit HcnB (469 aa).

In terms of assembly, heterotrimer of HcnA, HcnB and HcnC.

It localises to the cell membrane. The catalysed reaction is glycine + 2 A = hydrogen cyanide + 2 AH2 + CO2. A three-component membrane-bound flavoenzyme that catalyzes the formation of hydrogen cyanide, a secondary metabolite, by transfer of electrons to a cyanide-resistant branch of the aerobic respiratory chain. Contributes to suppression of black root rot of tobacco. The chain is Hydrogen cyanide synthase subunit HcnB from Pseudomonas protegens (strain DSM 19095 / LMG 27888 / CFBP 6595 / CHA0).